The chain runs to 195 residues: Large ribosomal subunit protein bL25 (195 aa).

This sequence belongs to the bacterial ribosomal protein bL25 family. CTC subfamily. In terms of assembly, part of the 50S ribosomal subunit; part of the 5S rRNA/L5/L18/L25 subcomplex. Contacts the 5S rRNA. Binds to the 5S rRNA independently of L5 and L18.

This is one of the proteins that binds to the 5S RNA in the ribosome where it forms part of the central protuberance. The chain is Large ribosomal subunit protein bL25 from Chlorobium chlorochromatii (strain CaD3).